The sequence spans 444 residues: Proline--tRNA ligase (444 aa).

The protein belongs to the class-II aminoacyl-tRNA synthetase family. ProS type 2 subfamily. Homodimer.

The protein localises to the cytoplasm. It catalyses the reaction tRNA(Pro) + L-proline + ATP = L-prolyl-tRNA(Pro) + AMP + diphosphate. Functionally, catalyzes the attachment of proline to tRNA(Pro) in a two-step reaction: proline is first activated by ATP to form Pro-AMP and then transferred to the acceptor end of tRNA(Pro). The chain is Proline--tRNA ligase from Methylobacterium sp. (strain 4-46).